The sequence spans 108 residues: MQALLCALAGLALLRAGTGEWGQGPRDTPGRRAAESPSSPGDLAGSPGCDRHAAVQRRLDIMEETVEKTVEHLEAEVTGLLGLLEELASNLPTGPFSPKPDLLGDDGF.

Positions 1 to 19 are cleaved as a signal peptide; that stretch reads MQALLCALAGLALLRAGTG. 2 disordered regions span residues 18-49 and 89-108; these read TGEW…SPGC and SNLP…DDGF. Positions 54–91 form a coiled coil; the sequence is AVQRRLDIMEETVEKTVEHLEAEVTGLLGLLEELASNL.

This sequence belongs to the PLAC9 family. In terms of tissue distribution, highly expressed in placenta, and weakly in ovary, testis, and lung.

The protein localises to the secreted. This is Placenta-specific protein 9 (Plac9) from Mus musculus (Mouse).